The sequence spans 365 residues: Phosphatidylcholine:ceramide cholinephosphotransferase 4 (365 aa).

At 1 to 44 (MISYPFFSLSPPGLVPPPMAVPPVEMYSGSFWNRMRKPLPLRTQ) the chain is on the cytoplasmic side. The chain crosses the membrane as a helical span at residues 45–65 (VIRFTVVFVIVSFILAVALQI). Residues 66–92 (THERMPDPKVTKPLPDLGFELLTKVPG) lie on the Lumenal side of the membrane. Residues 93–113 (MYVLADCCIGFLNILSVFTAF) form a helical membrane-spanning segment. Residues 114–165 (KLYLLHRHCVGSGEPELPCNIPGVSRFFLSVWLCKENCRIELRNIHTIAWIR) lie on the Cytoplasmic side of the membrane. Residues 166–186 (FITSYALLLLFRSAVIVMTSL) traverse the membrane as a helical segment. Over 187 to 229 (PAPDDLCQDPPKIENPVKNVILTVLTAGGGSIHCGDLMYSGHT) the chain is Lumenal. The active site involves histidine 228. A helical membrane pass occupies residues 230 to 250 (VILTLHLMFHWIYGAMVHWSF). Position 251 (arginine 251) is a topological domain, cytoplasmic. The chain crosses the membrane as a helical span at residues 252 to 272 (PVVTVVAIFGYYCIVASRFHY). Active-site residues include histidine 271 and aspartate 275. Residues 273–275 (TDD) are Lumenal-facing. Residues 276 to 296 (VLVAIYLTIATFIAVGHNADG) form a helical membrane-spanning segment. Residues 297–365 (APWQLQLFIR…SLMFKCGAYV (69 aa)) are Cytoplasmic-facing.

It belongs to the sphingomyelin synthase family.

The protein resides in the golgi apparatus membrane. It carries out the reaction an N-acylsphing-4-enine + a 1,2-diacyl-sn-glycero-3-phosphocholine = a sphingomyelin + a 1,2-diacyl-sn-glycerol. It catalyses the reaction an N-acylsphinganine + a 1,2-diacyl-sn-glycero-3-phosphocholine = an N-acylsphinganine-1-phosphocholine + a 1,2-diacyl-sn-glycerol. The catalysed reaction is an N-acylsphing-4-enine + a 1,2-diacyl-sn-glycero-3-phosphoethanolamine = an N-acylsphing-4-enine 1-phosphoethanolamine + a 1,2-diacyl-sn-glycerol. The enzyme catalyses an N-acylsphinganine + a 1,2-diacyl-sn-glycero-3-phosphoethanolamine = an N-acylsphinganine-1-phosphoethanolamine + a 1,2-diacyl-sn-glycerol. It carries out the reaction a 1,2-diacyl-sn-glycero-3-phospho-(1D-myo-inositol) + an N-acylsphing-4-enine = an N-acylsphing-4-enine-(1D-myo-inositol) + a 1,2-diacyl-sn-glycerol. It catalyses the reaction an N-acylsphinganine + a 1,2-diacyl-sn-glycero-3-phospho-(1D-myo-inositol) = an N-acylsphinganine-(1D-myo-inositol) + a 1,2-diacyl-sn-glycerol. Its function is as follows. Bifunctional sphingomyelin (SM)/ethanolamine phosphorylceramide (EPC) synthase with minimal inositol phosphorylceramide (IPC) synthase activity. Specificity is likely to be defined by residues in the lumenal catalytic domain that interact with the polar head groups of the phospholipid donors. SM is synthesized by both stages of the parasite life cycle, bloodstream forms (BSF) and procyclic forms (PCF), by transferring the phosphoryl headgroup from a 1,2-diacyl-sn-glycero-3-phosphocholine to an N-acylsphing-4-enine (ceramide) or an N-acylsphinganine (dihydroceramide) with release of 1,2-diacyl-sn-glycerol. Also catalyzes the reverse reaction, production of ceramide from sphingomyelin. EPC is synthesized by transferring phosphoethanolamine from a 1,2-diacyl-sn-glycero-3-phosphoethanolamine to ceramide or dihydroceramide by BSF and PCF, while IPC is confined to PCF. The ceramide/dihydroceramide ratios are skewed towards dihydroceramide in PCF parasites and ceramide in BSF parasites, this is likely due to differential expression and/or regulation of dihydroceramide desaturase, the enzyme responsible for converting dihydroceramide to ceramide. This chain is Phosphatidylcholine:ceramide cholinephosphotransferase 4, found in Trypanosoma brucei brucei.